Consider the following 430-residue polypeptide: Trigger factor (430 aa).

In terms of domain architecture, PPIase FKBP-type spans 163–248; sequence GNIAIIDFKG…IKDIKVKELP (86 aa).

This sequence belongs to the FKBP-type PPIase family. Tig subfamily.

The protein localises to the cytoplasm. The catalysed reaction is [protein]-peptidylproline (omega=180) = [protein]-peptidylproline (omega=0). In terms of biological role, involved in protein export. Acts as a chaperone by maintaining the newly synthesized protein in an open conformation. Functions as a peptidyl-prolyl cis-trans isomerase. In Clostridium botulinum (strain Kyoto / Type A2), this protein is Trigger factor.